The sequence spans 675 residues: E3 ubiquitin-protein ligase COP1 (675 aa).

The segment at 1 to 40 is disordered; that stretch reads MEEISTDPVVPAVKPDPRTSSVGEGANRHENDDGGSGGSE. Residues Cys52, Cys55, Cys67, His69, Cys72, Cys75, Cys86, and Cys89 each contribute to the Zn(2+) site. The RING-type zinc finger occupies 52–90; the sequence is CPICMQIIKDAFLTACGHSFCYMCIITHLRNKSDCPCCS. Residues 67–177 are CLS (cytoplasmic localization signal); it reads CGHSFCYMCI…LDFLHCLRKQ (111 aa). The segment at 120–177 is SNLS (subnuclear localization signal); that stretch reads ASPLDQFREALQRGCDVSIKEVDNLLTLLAERKRKMEQEEAERNMQILLDFLHCLRKQ. Residues 134–201 adopt a coiled-coil conformation; sequence CDVSIKEVDN…IKEDINAVER (68 aa). Residues 261 to 290 are disordered; that stretch reads EGKAQGSSHGLPKKDALSGSDSQSLNQSTV. Positions 279–290 are enriched in polar residues; the sequence is GSDSQSLNQSTV. Residues 294–317 carry the Bipartite nuclear localization signal motif; it reads RKKRIHAQFNDLQECYLQKRRQLA. WD repeat units lie at residues 369-408, 418-458, 461-501, 503-543, 547-585, 588-627, and 642-675; these read HSAN…NEPA, STRS…SLME, EHEK…SVIN, DMKA…QPLH, GHKK…PVRT, GHTN…PVTS, and AGSY…VLAA. A binding of human TRIB1 COP1-binding-motif region spans residues 593–595; the sequence is KNF.

As to quaternary structure, homodimer. Interacts with HY5, HYH, BBX24/STO, BBX25/STH, CIP8, COP10, SPA1, SPA2, SPA3, SPA4 and UVR8 and phosphorylated PHYA. Light induces dissociation of the SPA1/COP1 complex. Interacts with HRT/RPP8 and triggers it to the 26s proteasome. Binds to CRY2; this competitive interaction prevents triggering to proteasome of other binding proteins. Binds to SHW1 in the nucleus. Bonds to CIP7. Interacts with CSU2. Binds to CIP1. Interacts directly with DHU1. Associates to UNE10/PIF8. Binds directly to PCH1 and PCHL. Post-translationally, autoubiquitinated.

The protein resides in the nucleus. Its subcellular location is the cytoplasm. The enzyme catalyses S-ubiquitinyl-[E2 ubiquitin-conjugating enzyme]-L-cysteine + [acceptor protein]-L-lysine = [E2 ubiquitin-conjugating enzyme]-L-cysteine + N(6)-ubiquitinyl-[acceptor protein]-L-lysine.. The protein operates within protein modification; protein ubiquitination. Its function is as follows. E3 ubiquitin-protein ligase that acts as a repressor of photomorphogenesis and as an activator of etiolation in darkness. E3 ubiquitin ligases accept ubiquitin from an E2 ubiquitin-conjugating enzyme in the form of a thioester and then directly transfers the ubiquitin to targeted substrates. Represses photomorphogenesis in darkness by mediating ubiquitination and subsequent proteasomal degradation of light-induced transcription factors such as HY5, HYH and LAF1. Down-regulates MYB21, probably via ubiquitination process. Light stimuli abrogate the repression of photomorphogenesis, possibly due to its localization to the cytoplasm. Could play a role in switching between skotomorphogenetic and photomorphogenetic pathways. Mediates the ubiquitination-dependent degradation of HY5 in the darkness during seedling development (e.g. hypocotyl growth). Represses CIP7 in darkness. Triggers ubiquitination and subsequent protein degradation of UNE10/PIF8, PCH1 and PCHL in the dark. The chain is E3 ubiquitin-protein ligase COP1 from Arabidopsis thaliana (Mouse-ear cress).